The following is a 329-amino-acid chain: NADH-quinone oxidoreductase subunit H (329 aa).

A run of 9 helical transmembrane segments spans residues 9-29 (LIKI…ATYI), 42-62 (GPCY…IKLF), 75-95 (FIFT…MAPI), 117-137 (IGFL…ILAG), 154-174 (IQLL…LMVV), 188-208 (GGFL…FLIA), 238-258 (LKWG…SFVI), 269-291 (WGFI…LSMW), and 309-329 (WKIM…IILI).

This sequence belongs to the complex I subunit 1 family. As to quaternary structure, NDH-1 is composed of 14 different subunits. Subunits NuoA, H, J, K, L, M, N constitute the membrane sector of the complex.

It localises to the cell inner membrane. The enzyme catalyses a quinone + NADH + 5 H(+)(in) = a quinol + NAD(+) + 4 H(+)(out). Its function is as follows. NDH-1 shuttles electrons from NADH, via FMN and iron-sulfur (Fe-S) centers, to quinones in the respiratory chain. The immediate electron acceptor for the enzyme in this species is believed to be ubiquinone. Couples the redox reaction to proton translocation (for every two electrons transferred, four hydrogen ions are translocated across the cytoplasmic membrane), and thus conserves the redox energy in a proton gradient. This subunit may bind ubiquinone. The chain is NADH-quinone oxidoreductase subunit H from Helicobacter pylori (strain ATCC 700392 / 26695) (Campylobacter pylori).